The following is a 119-amino-acid chain: T cell receptor alpha variable 29/delta variable 5 (119 aa).

The signal sequence occupies residues 1–21 (MAMLLGASVLILWLQPDWVNS). The Ig-like domain occupies 22–119 (QQKNDDQQVK…DSAVYFCAAS (98 aa)). Cysteine 49 and cysteine 116 are oxidised to a cystine. Residue asparagine 93 is glycosylated (N-linked (GlcNAc...) asparagine).

In terms of assembly, alpha-beta TR is a heterodimer composed of an alpha and beta chain; disulfide-linked. The alpha-beta TR is associated with the transmembrane signaling CD3 coreceptor proteins to form the TR-CD3 (TcR or TCR). The assembly of alpha-beta TR heterodimers with CD3 occurs in the endoplasmic reticulum where a single alpha-beta TR heterodimer associates with one CD3D-CD3E heterodimer, one CD3G-CD3E heterodimer and one CD247 homodimer forming a stable octameric structure. CD3D-CD3E and CD3G-CD3E heterodimers preferentially associate with TR alpha and TR beta chains, respectively. The association of the CD247 homodimer is the last step of TcR assembly in the endoplasmic reticulum and is required for transport to the cell surface.

It is found in the cell membrane. In terms of biological role, v region of the variable domain of T cell receptor (TR) alpha chain that participates in the antigen recognition. Alpha-beta T cell receptors are antigen specific receptors which are essential to the immune response and are present on the cell surface of T lymphocytes. Recognize peptide-major histocompatibility (MH) (pMH) complexes that are displayed by antigen presenting cells (APC), a prerequisite for efficient T cell adaptive immunity against pathogens. Binding of alpha-beta TR to pMH complex initiates TR-CD3 clustering on the cell surface and intracellular activation of LCK that phosphorylates the ITAM motifs of CD3G, CD3D, CD3E and CD247 enabling the recruitment of ZAP70. In turn ZAP70 phosphorylates LAT, which recruits numerous signaling molecules to form the LAT signalosome. The LAT signalosome propagates signal branching to three major signaling pathways, the calcium, the mitogen-activated protein kinase (MAPK) kinase and the nuclear factor NF-kappa-B (NF-kB) pathways, leading to the mobilization of transcription factors that are critical for gene expression and essential for T cell growth and differentiation. The T cell repertoire is generated in the thymus, by V-(D)-J rearrangement. This repertoire is then shaped by intrathymic selection events to generate a peripheral T cell pool of self-MH restricted, non-autoaggressive T cells. Post-thymic interaction of alpha-beta TR with the pMH complexes shapes TR structural and functional avidity. This Homo sapiens (Human) protein is T cell receptor alpha variable 29/delta variable 5.